Consider the following 196-residue polypeptide: Ribosome maturation factor RimP (196 aa).

Residues 163–196 are disordered; sequence GLAPSKPTGPAPKRPKPKTNSSSNEPAAKKPRAE.

It belongs to the RimP family.

It is found in the cytoplasm. Its function is as follows. Required for maturation of 30S ribosomal subunits. In Stenotrophomonas maltophilia (strain R551-3), this protein is Ribosome maturation factor RimP.